The chain runs to 392 residues: Ceramide phosphoethanolamine synthase (392 aa).

At 1–10 (MIGPSSQISK) the chain is on the lumenal side. A helical transmembrane segment spans residues 11–31 (ILLTLLFLLIIFYVFMDVELY). At 32–140 (LRIHNYAIER…MFDNVIGFSR (109 aa)) the chain is on the cytoplasmic side. A compositionally biased stretch (low complexity) spans 59 to 82 (SESGSGSIGGSSSSSSSSSSSTST). A disordered region spans residues 59–91 (SESGSGSIGGSSSSSSSSSSSTSTKLPTAGDRQ). A helical membrane pass occupies residues 141 to 161 (STFITPNMISFFHVGVACLAG). Topologically, residues 162 to 212 (KLVASDSLGYRRLGVLLFQIRTFLDDLDGHVARVRKHIRGERSEIGTSGYY) are lumenal. Residues 213-233 (VDGLCDGLGCIALLLGIFFYL) traverse the membrane as a helical segment. Residues 234 to 271 (KNNPPRRGYSIIPMSDSKLPEPTMMIPKMKATTRKVAK) are Cytoplasmic-facing. Residues 272–288 (NVISFTGQLLLSSTAWN) form a helical membrane-spanning segment. The Lumenal segment spans residues 289–319 (RYIAVYQNMLEREDVSGNQSHCQDYVFKSTW). A helical transmembrane segment spans residues 320–340 (FFCVAWMWRIVNVHALLHCVL). Residues 341–356 (LSIFCDKLWDFLRAIR) are Cytoplasmic-facing. The helical transmembrane segment at 357–377 (YSGYIILLVAICLTEMHILEA) threads the bilayer. At 378 to 392 (QNYIFNSTACSNISL) the chain is on the lumenal side.

The protein belongs to the CDP-alcohol phosphatidyltransferase class-I family. The cofactor is Mn(2+).

The protein localises to the membrane. It is found in the golgi apparatus membrane. The protein resides in the cell membrane. It catalyses the reaction CDP-ethanolamine + an N-acylsphing-4-enine = an N-acylsphing-4-enine 1-phosphoethanolamine + CMP + H(+). It carries out the reaction CDP-ethanolamine + an N-acyl-sphingoid base = an N-acyl-sphingoid 1-phosphoethanolamine + CMP + H(+). In terms of biological role, catalyzes the biosynthesis of ceramide phosphoethanolamine (CPE) through the transfer of a phosphatidyl head group from cytidine 5'-diphosphate (CDP)-ethanolamine on to the primary hydroxyl of ceramide. The protein is Ceramide phosphoethanolamine synthase of Drosophila melanogaster (Fruit fly).